The sequence spans 295 residues: MQLLDGKKTSNDIKNEIAAEVQSIKAAGGKVPHLAAVLVGNNGASLTYVGSKVKSCQEIGFDSTLVSLPETITEDELLAKIKELNEDDNLDGYIVQLPLPKHIDEQKILLAIDPDKDVDGFHPTNFGRMALEMESFIPATPFGIMELLERYKVETAGKHTVVIGRSHIVGRPMSILMSRKGNPGDSTVTLTHSRTKDLAEFTKNADIIITALGVPEFLKADMVKEGVTVIDVGITRVEDASNAKGYVIKGDVDFEGVSKKASFITPVPGGVGPMTIAMLLKNTLLARKMRSAKNK.

NADP(+) contacts are provided by residues 164 to 166 (GRS), serine 193, and isoleucine 234.

This sequence belongs to the tetrahydrofolate dehydrogenase/cyclohydrolase family. Homodimer.

It catalyses the reaction (6R)-5,10-methylene-5,6,7,8-tetrahydrofolate + NADP(+) = (6R)-5,10-methenyltetrahydrofolate + NADPH. The enzyme catalyses (6R)-5,10-methenyltetrahydrofolate + H2O = (6R)-10-formyltetrahydrofolate + H(+). It participates in one-carbon metabolism; tetrahydrofolate interconversion. Catalyzes the oxidation of 5,10-methylenetetrahydrofolate to 5,10-methenyltetrahydrofolate and then the hydrolysis of 5,10-methenyltetrahydrofolate to 10-formyltetrahydrofolate. In Flavobacterium johnsoniae (strain ATCC 17061 / DSM 2064 / JCM 8514 / BCRC 14874 / CCUG 350202 / NBRC 14942 / NCIMB 11054 / UW101) (Cytophaga johnsonae), this protein is Bifunctional protein FolD.